Reading from the N-terminus, the 775-residue chain is Tumor necrosis factor alpha-induced protein 3 (775 aa).

Ala2 carries the N-acetylalanine modification. The tract at residues 58-300 is TRAF-binding; sequence PQFREIIHKA…LTDPENEMKE (243 aa). The OTU domain maps to 92–263; sequence LVALKTNGDG…SQHFVPLVTL (172 aa). Asp100 is a catalytic residue. Catalysis depends on Cys103, which acts as the Nucleophile. Interaction with ubiquitin stretches follow at residues 157 to 159, 190 to 192, and 224 to 227; these read LCY, SLE, and FAPL. His256 functions as the Proton acceptor in the catalytic mechanism. Residues 369 to 775 form an interaction with TNIP1 region; sequence AQNPLEPSTP…ECYQFKQMYG (407 aa). An A20-type 1 zinc finger spans residues 381 to 416; sequence SLMDIKCETPNCPFFMSVNTQPLCHECSERRQKNQS. The segment at 386–445 is interaction with RIPK1; sequence KCETPNCPFFMSVNTQPLCHECSERRQKNQSKLPKLNSKLGPEGLPGVGLGSSNWSPEET. Residues Cys387, Cys392, Cys404, and Cys407 each contribute to the Zn(2+) site. The tract at residues 415–455 is disordered; that stretch reads QSKLPKLNSKLGPEGLPGVGLGSSNWSPEETAGGPHSAPPT. Ser451 carries the phosphoserine modification. 2 consecutive A20-type zinc fingers follow at residues 464–499 and 500–533; these read ETTA…NASH and TADP…AEPS. Positions 470, 475, 487, 490, 506, 509, 521, and 524 each coordinate Zn(2+). Residues 567–580 are compositionally biased toward polar residues; sequence TGNVSPSGCLSQAA. Residues 567 to 590 form a disordered region; it reads TGNVSPSGCLSQAARTPGDRAGTS. 4 consecutive A20-type zinc fingers follow at residues 586-621, 636-671, 695-730, and 741-775; these read RAGT…ENKQ, FQNN…NQRF, VASR…RVGS, and EPPK…QMYG. The interval 590-640 is required for proteasomal degradation of UBE2N and UBE2D3, TRAF6 deubiquitination, and TAX1BP1 interaction with UBE2N; it reads SKCRKAGCMYFGTPENKGFCTLCFIEYRENKQSVTASEKAGSPAPRFQNNV. The sufficient for inhibitory activity of TNF-induced NF-kappa-B activity stretch occupies residues 591–775; it reads KCRKAGCMYF…ECYQFKQMYG (185 aa). Residues Cys592, Cys597, Cys609, Cys612, Cys642, Cys647, Cys659, Cys662, Cys701, Cys706, Cys718, Cys721, Cys747, Cys752, Cys764, and Cys767 each coordinate Zn(2+). Residues 682 to 775 are required for lysosomal localization and for TRAF2 lysosomal degradation; it reads RSSQHRDMPR…ECYQFKQMYG (94 aa).

The protein belongs to the peptidase C64 family. In terms of assembly, homodimer. Interacts with TNIP1, TAX1BP1 and TRAF2. Interacts with RNF11, ITCH and TAX1BP1 only after TNF stimulation; these interaction are transient and they are lost after 1 hour of stimulation with TNF. Interacts with YWHAZ and YWHAH. Interacts with IKBKG; the interaction is induced by TNF stimulation and by polyubiquitin. Interacts with RIPK1. Interacts with UBE2N; the interaction requires TAX1BP1. Interacts with TRAF6. Found in most tissues during development. Strikingly high levels are found in lymphoid organs, including the thymus, spleen, and gut-associated lymphoid tissue. Constitutively expressed in immature and mature thymocyte subpopulations as well as in resting peripheral T-cells; activation of these leads to down-regulation.

It localises to the cytoplasm. The protein resides in the nucleus. It is found in the lysosome. The enzyme catalyses Thiol-dependent hydrolysis of ester, thioester, amide, peptide and isopeptide bonds formed by the C-terminal Gly of ubiquitin (a 76-residue protein attached to proteins as an intracellular targeting signal).. Its function is as follows. Ubiquitin-editing enzyme that contains both ubiquitin ligase and deubiquitinase activities. Involved in immune and inflammatory responses signaled by cytokines, such as TNF-alpha and IL-1 beta, or pathogens via Toll-like receptors (TLRs) through terminating NF-kappa-B activity. Essential component of a ubiquitin-editing protein complex, comprising also RNF11, ITCH and TAX1BP1, that ensures the transient nature of inflammatory signaling pathways. In cooperation with TAX1BP1 promotes disassembly of E2-E3 ubiquitin protein ligase complexes in IL-1R and TNFR-1 pathways; affected are at least E3 ligases TRAF6, TRAF2 and BIRC2, and E2 ubiquitin-conjugating enzymes UBE2N and UBE2D3. In cooperation with TAX1BP1 promotes ubiquitination of UBE2N and proteasomal degradation of UBE2N and UBE2D3. Upon TNF stimulation, deubiquitinates 'Lys-63'-polyubiquitin chains on RIPK1 and catalyzes the formation of 'Lys-48'-polyubiquitin chains. This leads to RIPK1 proteasomal degradation and consequently termination of the TNF- or LPS-mediated activation of NF-kappa-B. Deubiquitinates TRAF6 probably acting on 'Lys-63'-linked polyubiquitin. Upon T-cell receptor (TCR)-mediated T-cell activation, deubiquitinates 'Lys-63'-polyubiquitin chains on MALT1 thereby mediating disassociation of the CBM (CARD11:BCL10:MALT1) and IKK complexes and preventing sustained IKK activation. Deubiquitinates NEMO/IKBKG; the function is facilitated by TNIP1 and leads to inhibition of NF-kappa-B activation. Upon stimulation by bacterial peptidoglycans, probably deubiquitinates RIPK2. Can also inhibit I-kappa-B-kinase (IKK) through a non-catalytic mechanism which involves polyubiquitin; polyubiquitin promotes association with IKBKG and prevents IKK MAP3K7-mediated phosphorylation. Targets TRAF2 for lysosomal degradation. In vitro able to deubiquitinate 'Lys-11'-, 'Lys-48'- and 'Lys-63' polyubiquitin chains. Inhibitor of programmed cell death. Has a role in the function of the lymphoid system. Required for LPS-induced production of pro-inflammatory cytokines and IFN beta in LPS-tolerized macrophages. The protein is Tumor necrosis factor alpha-induced protein 3 (Tnfaip3) of Mus musculus (Mouse).